A 572-amino-acid chain; its full sequence is Sorting nexin 2B (572 aa).

Disordered stretches follow at residues 1–97 and 114–136; these read MMGS…SSYL and SEIN…SPSS. The segment covering 9–30 has biased composition (basic and acidic residues); the sequence is ESHLHSSKEEMEKLFLREDGDP. Polar residues predominate over residues 32 to 53; sequence TKSNVNGDKSNSNYRSAMSTLF. Residues 124 to 136 show a composition bias toward low complexity; the sequence is SQSSDSLSRSPSS. The residue at position 133 (S133) is a Phosphoserine. The region spanning 147–266 is the PX domain; sequence SNPQKEQEAT…KVFLQAQGKL (120 aa). Positions 190, 216, and 233 each coordinate a 1,2-diacyl-sn-glycero-3-phospho-(1D-myo-inositol-3-phosphate). Residues 318–572 form the BAR domain; that stretch reads LRQSVSNDWG…ETRQYDRESS (255 aa).

It belongs to the sorting nexin family. As to quaternary structure, homodimer. Heterodimer with SNX1 or SNX2B. Component of the retromer complex which consists of VPS29 (MAG1), VPS26 (VPS26A or VPS26B), VPS35 (VPS35A or VPS35B or VPS35C), VPS5/17 (SNX1 or SNX2A or SNX2B). Ubiquitously expressed.

It localises to the cytoplasm. Its subcellular location is the endosome membrane. The protein localises to the prevacuolar compartment membrane. The protein resides in the golgi apparatus. It is found in the trans-Golgi network membrane. Plays a role in vesicular protein sorting. Acts at the crossroads between the secretory and endocytic pathways. Is involved in the endosome to vacuole protein transport and, as component of the membrane-associated retromer complex, is also involved in endosome-to-Golgi retrograde transport. The polypeptide is Sorting nexin 2B (SNX2B) (Arabidopsis thaliana (Mouse-ear cress)).